The sequence spans 181 residues: HGPRTase-like protein 2 (181 aa).

The protein belongs to the purine/pyrimidine phosphoribosyltransferase family. Archaeal HPRT subfamily.

In terms of biological role, may catalyze a purine salvage reaction, the substrate is unknown. The protein is HGPRTase-like protein 2 of Haloquadratum walsbyi (strain DSM 16854 / JCM 12705 / C23).